A 995-amino-acid chain; its full sequence is Aconitate hydratase 2, mitochondrial (995 aa).

The transit peptide at 1 to 83 (MYRRATSGVR…PASLRAQARN (83 aa)) directs the protein to the mitochondrion. Substrate is bound by residues glutamine 187 and 306–308 (DSH). Residues cysteine 538, cysteine 604, and cysteine 607 each contribute to the [4Fe-4S] cluster site. Residues arginine 637, arginine 642, arginine 800, and 881–882 (SR) each bind substrate.

It belongs to the aconitase/IPM isomerase family. In terms of assembly, monomer. It depends on [4Fe-4S] cluster as a cofactor. As to expression, mostly expressed in roots, leaves and flowers, also present in stems, and, at low levels, in seeds.

It is found in the mitochondrion. The catalysed reaction is citrate = D-threo-isocitrate. The protein operates within carbohydrate metabolism; tricarboxylic acid cycle; isocitrate from oxaloacetate: step 2/2. Catalyzes the isomerization of citrate to isocitrate via cis-aconitate. Contributes to oxidative stress tolerance. Involved in acetate assimilation. The polypeptide is Aconitate hydratase 2, mitochondrial (Arabidopsis thaliana (Mouse-ear cress)).